We begin with the raw amino-acid sequence, 245 residues long: Probable phosphatase Spro_1934 (245 aa).

The Zn(2+) site is built by histidine 7, histidine 9, histidine 15, histidine 40, glutamate 73, histidine 101, histidine 131, aspartate 192, and histidine 194.

The protein belongs to the PHP family. Homotrimer. Zn(2+) is required as a cofactor.

The protein is Probable phosphatase Spro_1934 of Serratia proteamaculans (strain 568).